Reading from the N-terminus, the 138-residue chain is ATP synthase epsilon chain (138 aa).

It belongs to the ATPase epsilon chain family. As to quaternary structure, F-type ATPases have 2 components, CF(1) - the catalytic core - and CF(0) - the membrane proton channel. CF(1) has five subunits: alpha(3), beta(3), gamma(1), delta(1), epsilon(1). CF(0) has three main subunits: a, b and c.

It localises to the cell membrane. In terms of biological role, produces ATP from ADP in the presence of a proton gradient across the membrane. This is ATP synthase epsilon chain from Streptococcus gordonii (strain Challis / ATCC 35105 / BCRC 15272 / CH1 / DL1 / V288).